The following is a 207-amino-acid chain: GILT-like protein 2 (207 aa).

An N-terminal signal peptide occupies residues M1–P19. The cysteines at positions 40 and 43 are disulfide-linked. An N-linked (GlcNAc...) asparagine glycan is attached at N182.

Belongs to the GILT family.

It is found in the secreted. Probable lysosomal thiol reductase that can reduce protein disulfide bonds. Involved in the immune response to bacterial infection. The protein is GILT-like protein 2 of Drosophila melanogaster (Fruit fly).